Reading from the N-terminus, the 72-residue chain is Bowman-Birk type trypsin inhibitor (72 aa).

Intrachain disulfides connect C12–C66, C13–C28, C16–C62, C18–C26, C36–C43, C40–C55, and C45–C53.

The protein belongs to the Bowman-Birk serine protease inhibitor family.

The polypeptide is Bowman-Birk type trypsin inhibitor (Vigna radiata var. radiata (Mung bean)).